The chain runs to 514 residues: 2,3-bisphosphoglycerate-independent phosphoglycerate mutase (514 aa).

Aspartate 13 and serine 63 together coordinate Mn(2+). Residue serine 63 is the Phosphoserine intermediate of the active site. Substrate contacts are provided by residues histidine 124, 154-155, arginine 186, arginine 192, 258-261, and lysine 332; these read RD and RADR. Aspartate 399, histidine 403, aspartate 440, histidine 441, and histidine 459 together coordinate Mn(2+).

Belongs to the BPG-independent phosphoglycerate mutase family. In terms of assembly, monomer. Mn(2+) is required as a cofactor.

The enzyme catalyses (2R)-2-phosphoglycerate = (2R)-3-phosphoglycerate. It participates in carbohydrate degradation; glycolysis; pyruvate from D-glyceraldehyde 3-phosphate: step 3/5. In terms of biological role, catalyzes the interconversion of 2-phosphoglycerate and 3-phosphoglycerate. The sequence is that of 2,3-bisphosphoglycerate-independent phosphoglycerate mutase from Legionella pneumophila (strain Paris).